Reading from the N-terminus, the 114-residue chain is SCP2 domain-containing protein YusD (114 aa).

An SCP2 domain is found at 21 to 101 (NASTLLITFQ…RALLKLEAIL (81 aa)).

The chain is SCP2 domain-containing protein YusD (yusD) from Bacillus subtilis (strain 168).